Reading from the N-terminus, the 289-residue chain is Membrane protein insertase YidC (289 aa).

Positions 1–19 (MKKKALLPLLLGIMVFLAG) are cleaved as a signal peptide. A lipid anchor (N-palmitoyl cysteine) is attached at Cys-20. Cys-20 carries S-diacylglycerol cysteine lipidation. 5 helical membrane passes run 55–75 (YGLAIIVLVLAIRIIVLPFML), 133–153 (MLGCLPMLIQMPIIMGLFFVL), 177–197 (IWITVIAGVLYFLQAYVSTFS), 210–230 (MIISPIMIIWVSLSSAAALGL), and 231–251 (YWSVSAAFLIVQTYIANAYYS). Positions 268–289 (EHGGSGNSKGAKVVSKKNKKKK) are disordered.

The protein belongs to the OXA1/ALB3/YidC family. Type 2 subfamily.

The protein localises to the cell membrane. Its function is as follows. Required for the insertion and/or proper folding and/or complex formation of integral membrane proteins into the membrane. Involved in integration of membrane proteins that insert both dependently and independently of the Sec translocase complex, as well as at least some lipoproteins. In Staphylococcus carnosus (strain TM300), this protein is Membrane protein insertase YidC.